The sequence spans 307 residues: Protease HtpX homolog (307 aa).

Helical transmembrane passes span 7 to 27 and 28 to 48; these read AILL…IGGA and SGAT…YWNS. His-130 lines the Zn(2+) pocket. Glu-131 is an active-site residue. Residue His-134 coordinates Zn(2+). Helical transmembrane passes span 145 to 165 and 171 to 191; these read ITAT…FFGG and GPGI…AMLV. Glu-200 provides a ligand contact to Zn(2+). The tract at residues 277–307 is disordered; that stretch reads AGQSGGGLAPGGPPPDPSSPWNKGSRRGPWG.

It belongs to the peptidase M48B family. Zn(2+) is required as a cofactor.

The protein resides in the cell inner membrane. The protein is Protease HtpX homolog of Nitrobacter winogradskyi (strain ATCC 25391 / DSM 10237 / CIP 104748 / NCIMB 11846 / Nb-255).